The sequence spans 108 residues: Glutaredoxin-1 (108 aa).

In terms of domain architecture, Glutaredoxin spans 3 to 106; the sequence is EEFVQQRLAN…DILLSIGVLR (104 aa). Cysteine 23 and cysteine 26 are oxidised to a cystine.

The protein belongs to the glutaredoxin family.

It localises to the virion. Displays thioltransferase and dehydroascorbate reductase activities. The sequence is that of Glutaredoxin-1 (OPG075) from Cynomys gunnisoni (Gunnison's prairie dog).